The primary structure comprises 260 residues: UPF0246 protein Bxeno_A1262 (260 aa).

This sequence belongs to the UPF0246 family.

This is UPF0246 protein Bxeno_A1262 from Paraburkholderia xenovorans (strain LB400).